Here is a 497-residue protein sequence, read N- to C-terminus: tRNA-2-methylthio-N(6)-dimethylallyladenosine synthase (497 aa).

In terms of domain architecture, MTTase N-terminal spans 44–161; sequence KKVFVTTQGC…LPELYDQSHQ (118 aa). Residues Cys53, Cys90, Cys124, Cys205, Cys209, and Cys212 each contribute to the [4Fe-4S] cluster site. The Radical SAM core domain maps to 191 to 423; that stretch reads RVEGFKAFVS…QKVIIDSTLA (233 aa). The TRAM domain occupies 426 to 494; it reads HEMVGTTTRV…PHMVKGEIEA (69 aa).

The protein belongs to the methylthiotransferase family. MiaB subfamily. In terms of assembly, monomer. [4Fe-4S] cluster is required as a cofactor.

Its subcellular location is the cytoplasm. It catalyses the reaction N(6)-dimethylallyladenosine(37) in tRNA + (sulfur carrier)-SH + AH2 + 2 S-adenosyl-L-methionine = 2-methylsulfanyl-N(6)-dimethylallyladenosine(37) in tRNA + (sulfur carrier)-H + 5'-deoxyadenosine + L-methionine + A + S-adenosyl-L-homocysteine + 2 H(+). Functionally, catalyzes the methylthiolation of N6-(dimethylallyl)adenosine (i(6)A), leading to the formation of 2-methylthio-N6-(dimethylallyl)adenosine (ms(2)i(6)A) at position 37 in tRNAs that read codons beginning with uridine. The chain is tRNA-2-methylthio-N(6)-dimethylallyladenosine synthase from Psychrobacter cryohalolentis (strain ATCC BAA-1226 / DSM 17306 / VKM B-2378 / K5).